The primary structure comprises 170 residues: Shikimate kinase (170 aa).

Residue Gly11–Thr16 participates in ATP binding. A Mg(2+)-binding site is contributed by Thr15. Substrate-binding residues include Asp33, Arg57, and Gly80. Arg119 is an ATP binding site. Arg141 contacts substrate.

Belongs to the shikimate kinase family. As to quaternary structure, monomer. It depends on Mg(2+) as a cofactor.

Its subcellular location is the cytoplasm. The catalysed reaction is shikimate + ATP = 3-phosphoshikimate + ADP + H(+). It participates in metabolic intermediate biosynthesis; chorismate biosynthesis; chorismate from D-erythrose 4-phosphate and phosphoenolpyruvate: step 5/7. In terms of biological role, catalyzes the specific phosphorylation of the 3-hydroxyl group of shikimic acid using ATP as a cosubstrate. The chain is Shikimate kinase from Azobacteroides pseudotrichonymphae genomovar. CFP2.